The chain runs to 220 residues: Fructose-6-phosphate aldolase (220 aa).

Catalysis depends on lysine 85, which acts as the Schiff-base intermediate with substrate.

This sequence belongs to the transaldolase family. Type 3A subfamily. As to quaternary structure, homodecamer.

Its subcellular location is the cytoplasm. It catalyses the reaction beta-D-fructose 6-phosphate = dihydroxyacetone + D-glyceraldehyde 3-phosphate. Catalyzes the reversible formation of fructose 6-phosphate from dihydroxyacetone and D-glyceraldehyde 3-phosphate via an aldolization reaction. In Salmonella arizonae (strain ATCC BAA-731 / CDC346-86 / RSK2980), this protein is Fructose-6-phosphate aldolase.